The sequence spans 83 residues: UPF0457 protein YnzG (83 aa).

Belongs to the UPF0457 family.

The chain is UPF0457 protein YnzG (ynzG) from Bacillus subtilis (strain 168).